The primary structure comprises 523 residues: Paraspeckle component 1 (523 aa).

An N-acetylmethionine modification is found at Met1. RRM domains follow at residues 81–153 (CRLF…FATH) and 155–236 (AALT…PMEQ). The tract at residues 124 to 357 (ESRTLAEIAK…QLRHEEEHRR (234 aa)) is sufficient for paraspeckles localization. Positions 230 to 357 (IVEPMEQFDD…QLRHEEEHRR (128 aa)) are sufficient for perinucleolar caps localization and interaction with NONO. Residues 282–376 (DEMEKQQREQ…EQEELRRQQE (95 aa)) are a coiled coil. A phosphoserine mark is found at Ser409, Ser473, and Ser477. The tract at residues 460–523 (GAVHNDRFPQ…FEGPNKRRRY (64 aa)) is disordered. Polar residues predominate over residues 472-490 (PSQMGSPMGNRTGSETPQA). Positions 497–514 (PVSGGPGGFGRGSQGGNF) are enriched in gly residues. Arg507 carries the post-translational modification Omega-N-methylarginine. The residue at position 509 (Ser509) is a Phosphoserine.

It belongs to the PSPC family. In terms of assembly, forms heterodimers with NONO; this involves formation of a coiled coil domain by helices from both proteins. Found in a RNP complex with CAT2 transcribed nuclear RNA (CTN-RNA). Interaction with NONO is required for its targeting to paraspeckles and perinucleolar caps. Interacts with SFPQ. Part of the HDP-RNP complex composed of at least HEXIM1, PRKDC, XRCC5, XRCC6, paraspeckle proteins (SFPQ, NONO, PSPC1, RBM14, and MATR3) and NEAT1 RNA. Interacts with ALKBH5 (when acetylated); interaction with acetylated ALKBH5 facilitates recognition of N(6)-methyladenosine (m6A) RNAs. As to expression, isoform 1 is strongly expressed in testis (leptoten spermatocytes, round spematids and Sertoli cells) and moderately in cerebrum, cerebellum, lung, spleen and ovary (at protein level). Isoform 2 is strongly expressed in kidney and moderately in salivary gland (at protein level).

It is found in the nucleus speckle. It localises to the nucleus. The protein resides in the nucleolus. Its subcellular location is the nucleus matrix. The protein localises to the cytoplasm. Functionally, RNA-binding protein required for the formation of nuclear paraspeckles. Binds to poly(A), poly(G) and poly(U) RNA homopolymers. Regulates, cooperatively with NONO and SFPQ, androgen receptor-mediated gene transcription activity in Sertoli cell line. Regulates the circadian clock by repressing the transcriptional activator activity of the CLOCK-BMAL1 heterodimer. Plays a role in the regulation of DNA virus-mediated innate immune response by assembling into the HDP-RNP complex, a complex that serves as a platform for IRF3 phosphorylation and subsequent innate immune response activation through the cGAS-STING pathway. In Mus musculus (Mouse), this protein is Paraspeckle component 1 (Pspc1).